Reading from the N-terminus, the 152-residue chain is D-erythrulose-4-phosphate isomerase (152 aa).

Cys67 (proton acceptor) is an active-site residue.

The protein belongs to the LacAB/RpiB family.

It carries out the reaction D-erythrulose 4-phosphate = D-erythrose 4-phosphate. It functions in the pathway carbohydrate metabolism. Functionally, involved in catabolism of D-apiose. Catalyzes the isomerization of D-erythrulose 4-phosphate to D-erythrose 4-phosphate. This chain is D-erythrulose-4-phosphate isomerase, found in Pectobacterium atrosepticum (strain SCRI 1043 / ATCC BAA-672) (Erwinia carotovora subsp. atroseptica).